Reading from the N-terminus, the 259-residue chain is GTP cyclohydrolase FolE2 (259 aa).

The protein belongs to the GTP cyclohydrolase IV family.

The enzyme catalyses GTP + H2O = 7,8-dihydroneopterin 3'-triphosphate + formate + H(+). Its pathway is cofactor biosynthesis; 7,8-dihydroneopterin triphosphate biosynthesis; 7,8-dihydroneopterin triphosphate from GTP: step 1/1. Converts GTP to 7,8-dihydroneopterin triphosphate. This is GTP cyclohydrolase FolE2 from Thermotoga neapolitana (strain ATCC 49049 / DSM 4359 / NBRC 107923 / NS-E).